The sequence spans 1042 residues: Elongation factor 3 (1042 aa).

6 HEAT repeats span residues Lys-9–Thr-46, Pro-86–Pro-124, Tyr-167–Asn-204, Asp-206–Ala-242, Ser-243–Asp-280, and Pro-289–Gly-327. ABC transporter domains follow at residues Glu-425–Ile-642 and Cys-668–Glu-994. Asn-704, Glu-923, Asn-926, and His-952 together coordinate ADP. A disordered region spans residues Lys-1009 to Asp-1042. Residues Arg-1020 to Lys-1031 are compositionally biased toward basic residues.

The protein belongs to the ABC transporter superfamily. ABCF family. EF3 subfamily. In terms of assembly, monomer.

It localises to the cytoplasm. It catalyses the reaction ATP + H2O = ADP + phosphate + H(+). The protein operates within protein biosynthesis; polypeptide chain elongation. Ribosome-dependent ATPase that functions in cytoplasmic translation elongation. Required for the ATP-dependent release of deacylated tRNA from the ribosomal E-site during protein biosynthesis. Stimulates the eEF1A-dependent binding of aminoacyl-tRNA to the ribosomal A-site, which has reduced affinity for tRNA as long as the E-site is occupied. Assists translation termination by stimulating the release of nascent protein from the ribosome by release factors. The sequence is that of Elongation factor 3 (TEF3) from Pneumocystis carinii.